A 287-amino-acid polypeptide reads, in one-letter code: Protoheme IX farnesyltransferase (287 aa).

7 consecutive transmembrane segments (helical) span residues 19 to 39, 100 to 120, 134 to 154, 162 to 182, 212 to 232, 233 to 253, and 267 to 287; these read LMVA…VTIT, MVLC…IVAV, FALL…WLAV, MLVV…WLHA, VWFH…LLEW, VGMR…AMLA, and VLCA…VSLF.

It belongs to the UbiA prenyltransferase family. Protoheme IX farnesyltransferase subfamily.

It is found in the cell inner membrane. It carries out the reaction heme b + (2E,6E)-farnesyl diphosphate + H2O = Fe(II)-heme o + diphosphate. The protein operates within porphyrin-containing compound metabolism; heme O biosynthesis; heme O from protoheme: step 1/1. In terms of biological role, converts heme B (protoheme IX) to heme O by substitution of the vinyl group on carbon 2 of heme B porphyrin ring with a hydroxyethyl farnesyl side group. The sequence is that of Protoheme IX farnesyltransferase from Nitratidesulfovibrio vulgaris (strain ATCC 29579 / DSM 644 / CCUG 34227 / NCIMB 8303 / VKM B-1760 / Hildenborough) (Desulfovibrio vulgaris).